The primary structure comprises 274 residues: Transcriptional activator PerA (274 aa).

The 98-residue stretch at 168–265 (DRVIKVIELD…NTTPKKYNGV (98 aa)) folds into the HTH araC/xylS-type domain. 2 DNA-binding regions (H-T-H motif) span residues 185 to 206 (GDVS…NKEN) and 232 to 255 (IDEI…KEYY).

Its function is as follows. Could help in the transcriptional activator of eaeA expression in enteropathogenic E.coli. However, it seems that it is PerC which acts as an activator. This is Transcriptional activator PerA (perA) from Escherichia coli O127:H6 (strain E2348/69 / EPEC).